Consider the following 270-residue polypeptide: Co-chaperone protein DjlA (270 aa).

Over Met1 to Lys6 the chain is Periplasmic. A helical membrane pass occupies residues Ile7–His31. At Met32 to Lys270 the chain is on the cytoplasmic side. Residues Asp204–Lys270 enclose the J domain.

As to quaternary structure, homodimer.

The protein localises to the cell inner membrane. Functionally, regulatory DnaK co-chaperone. Direct interaction between DnaK and DjlA is needed for the induction of the wcaABCDE operon, involved in the synthesis of a colanic acid polysaccharide capsule, possibly through activation of the RcsB/RcsC phosphotransfer signaling pathway. The colanic acid capsule may help the bacterium survive conditions outside the host. The sequence is that of Co-chaperone protein DjlA from Salmonella paratyphi A (strain ATCC 9150 / SARB42).